Reading from the N-terminus, the 378-residue chain is UDP-N-acetylenolpyruvoylglucosamine reductase (378 aa).

Positions 15-185 (VGGTPERLLE…LSVDLELADH (171 aa)) constitute an FAD-binding PCMH-type domain. Arg163 is a catalytic residue. Residue Ser248 is the Proton donor of the active site. Residue Glu370 is part of the active site.

The protein belongs to the MurB family. It depends on FAD as a cofactor.

It localises to the cytoplasm. The enzyme catalyses UDP-N-acetyl-alpha-D-muramate + NADP(+) = UDP-N-acetyl-3-O-(1-carboxyvinyl)-alpha-D-glucosamine + NADPH + H(+). It functions in the pathway cell wall biogenesis; peptidoglycan biosynthesis. Its function is as follows. Cell wall formation. In Leifsonia xyli subsp. xyli (strain CTCB07), this protein is UDP-N-acetylenolpyruvoylglucosamine reductase.